Consider the following 499-residue polypeptide: Zinc finger protein PLAG1 (499 aa).

The segment at 1-33 (MATVIPGDLSEVRDTQKAPSGKRKRGESKPRKN) is disordered. An interaction with KPNA2 region spans residues 2–84 (ATVIPGDLSE…SKYKLQRHMA (83 aa)). The Nuclear localization signal signature appears at 22–25 (KRKR). 7 C2H2-type zinc fingers span residues 34–56 (FPCQ…SFSH), 62–86 (YKCT…MATH), 92–114 (HKCN…LHTH), 121–143 (FKCE…LALH), 150–172 (LTCK…LKSH), 185–207 (HQCE…MVVH), and 213–236 (FLCQ…KKSH). The segment at 41-242 (KAFNSVEKLK…KKSHNQELLK (202 aa)) is decreased nuclear import with localization in the nucleus but also in the cytoplasm. A repression domain; contains 3 sumoylation motifs and massively decrease transcription activity region spans residues 243–383 (VKTEPVDFLD…SPASSSKLGL (141 aa)). The segment at 243-499 (VKTEPVDFLD…TLPRFHQAFQ (257 aa)) is activates transcription; Inhibition of nuclear import due to lack of NLS and KPNA2 interaction. Residues K244 and K263 each participate in a glycyl lysine isopeptide (Lys-Gly) (interchain with G-Cter in SUMO) cross-link. A compositionally biased stretch (low complexity) spans 365 to 379 (GGAPSSSQDSPASSS). The tract at residues 365–400 (GGAPSSSQDSPASSSKLGLEPQSGSPDDGAGDLSLS) is disordered. Residues 384–499 (EPQSGSPDDG…TLPRFHQAFQ (116 aa)) are massively activates transcription.

It belongs to the krueppel C2H2-type zinc-finger protein family. Interacts with KPNA2, which escorts protein to the nucleus via interaction with nuclear localization signal. Interacts with E3 SUMO-protein ligase PIAS1, PIAS2 and PIAS4. Sumoylated with SUMO1; which inhibits transcriptional activity, but does not affect nuclear localization. Blockers of sumoylation pathway such as SENP3 and inactive UBE2I increases transcriptional capacity. Sumoylation is increased in the presence of PIAS1. In terms of processing, acetylated by lysine acetyltransferase EP300; which activates transcriptional capacity. Lysine residues that are sumoylated also seem to be target for acetylation. Expressed in heart, spleen, lung, kidney, brain, testis and epididymis but not in salivary glands.

The protein localises to the nucleus. Functionally, transcription factor whose activation results in up-regulation of target genes, such as IGFII, leading to uncontrolled cell proliferation: when overexpressed in cultured cells, higher proliferation rate and transformation are observed. Other target genes such as CRLF1, CRABP2, CRIP2, PIGF are strongly induced in cells with PLAG1 induction. Proto-oncogene whose ectopic expression can trigger the development of pleomorphic adenomas of the salivary gland and lipoblastomas. Cooperates with CBFB-MYH11. The chain is Zinc finger protein PLAG1 (Plag1) from Mus musculus (Mouse).